The chain runs to 473 residues: uncharacterized protein (473 aa).

A signal peptide spans methionine 1 to glycine 19.

This is an uncharacterized protein from Methanocaldococcus jannaschii (strain ATCC 43067 / DSM 2661 / JAL-1 / JCM 10045 / NBRC 100440) (Methanococcus jannaschii).